The sequence spans 451 residues: MAKKLEAQGGRGGEEWDDGGAYENVKKVYVGQGDSGVVYVKFDYEKDGKIVSHEHGKQTLLGTEEFVVDPEDYITSVKIYYEKLFGSPIEIVTALIFKTFKGKTSQPFGLTSGEEAELGGGKIVGFHGSSSDLIHSVGVYIIPSTTPLTPPVSGGLTKLEAQGGRGGDVWDDGGAYDNVKKVYVGQGDSGVVYVKFDYEKDGKIVSLEHGKQTLLGTEEFEIDPEDYITYVKVYYEKLFGSPIEIVTALIFKTFKGKTSQPFGLTSGEEAELGGGKIVGFHGTSSDLIHSLGAYIIPSSTPLTPSSNTIPAQGGDGGVAWDDGVHDSVKKIYVGQGDSCVTYFKADYEKASKPVLGSDHGKKTLLGAEEFVLGPDEYVTAVSGYYDKIFSVDAPAIVSLKFKTNKRTSIPYGLEGGTEFVLEKKDHKIVGFYGQAGEYLYKLGVNVAPIAK.

At alanine 2 the chain carries N-acetylalanine. 3 consecutive Jacalin-type lectin domains span residues 2–143, 156–297, and 306–448; these read AKKL…YIIP, LTKL…YIIP, and SNTI…NVAP.

Belongs to the jacalin lectin family. In terms of assembly, component of the PYK10 complex, at least composed of PYK10/BGLU23, BGLU21, BGLU22, JAL22, JAL23, PBP1/JAL30, PBP2/JAL31, JAL32, JAL33, JAL34, JAL35, GLL22 and GLL23.

The sequence is that of Jacalin-related lectin 35 (JAL35) from Arabidopsis thaliana (Mouse-ear cress).